Here is a 1331-residue protein sequence, read N- to C-terminus: MVLTQQENLSVLVGQRFTCLLGTDLQLDPDGVSKWPWKSGIVRAASHKDLHCPEIKIFVEFDDEAWEKRTWIELYGATVKMFLVEHNLVLADRVSPSNSVPVQCPAMVYKVLVGKFSLGTATCLQFLGDKDKLFLSKELVKPVRDRETLKQFMQENKTFNKAFQELIRKSVDESRLQQATRNIIGMPINVYSMDPSMQWFSATISNVRTASRALEIKCEQLPSLKIIDPALLHVVLVHNYGDLNDKSRKPRAPKRKSQDTESEDQTELKQTRNEEVPSKDVTQKTSFLTYRRDDGKTLVVVDNPKATNNLFNYINTTTEDQQKVQQQSLSSKQSVPVGFGEALLGCAATTPGILNAATPPQANSPPSFGAATPQGKGTQNLPGDTTLLNGEAKREETNLFLSAAASQGNKRSLGFGMMESPSTFSSLSSMPSWSGQPKSENGPKSENLFAAFTNSSTVFPKGFEFSVKSFPEQKMLSVTDSPKTAPPMTCVQQQEQKVVKKPENNHTSVRAIKPQEPPYPKSPNKNDGVTYPRSILLDPQKLKRLQQSGDCFVQDGSCNDIAPHLHKCRECRLDRFGRSREQRDSAVFCRFFHFRRLHFNKHGMLKEGGFLTPNKYDAEAINLWLPLASNVVDLDLDTAKYILANIGDHFCKLVMSEKEVMSATDPSKQVAWKRAVRGVREMCDACDTTIFNLHWVCPKCGFGVCVDCYRMKKKSLSSGEDGNETFSWLKCVKGQLHEPENLMPTQIVPGKALYDVGDIVHSVRGRWGIKSNCLCSNKHVRPVVKPVVKEEVKPSTPEPEPTKAPLAQPNVCTAPDPIAIPSTPPTPACSSPLSWLTNLSQTTVNKENKDNLFASNLEHKPLPSFASFGKPVSALQTFGSSILTPTTSNNSGFLRNLLNSSTLKQETNEKSTPKILDDIFASLVQSRPLSDFARKPQGLPIQPSLMGFNTPHYWLCDNRLLCLQDPNNKSNWNVFRECWKQGQPVIVSGIHNNLNSELWRPESFRREFGDQEADLVNCRTNDIITGATVGDFWEGFEDISARLKNDKGEAMVLKLKDWPPGEDFRDTMLSRFEDLMNNIPLPEYTRREGKLNLAARLPAYFVRPDLGPKMYNAYGLITPEDRKYGTTNLHLDVSDATNVMVYVGIPKGEHDQEQEVIRTIQDGDADELTIKRYIEFKEKPGALWHIFAAKDTEKIRQFLKKVAEEQGHENPPDHDPIHDQSWYLDNTLRKRLLQEHGVQGWAIVQFLGDAVFIPAGAPHQVHNLYSCIKVAEDFVSPEHVKHCFWLTQEFRYLSHTHTNHEDKLQVKNVIYHAVKDSIAILKANEASLGKL.

Disordered regions lie at residues Leu-243–Asp-280, Thr-358–Leu-381, and Lys-497–Pro-532. A compositionally biased stretch (basic and acidic residues) spans Thr-266–Asp-280. The segment at Cys-683–Cys-708 adopts a C6-type zinc-finger fold. The LXXLL motif signature appears at Leu-894–Leu-898. Residues Arg-1086–Arg-1291 form the JmjC domain. Fe cation-binding residues include His-1130, Asp-1132, and His-1259.

The protein belongs to the JHDM2 histone demethylase family. Fe(2+) is required as a cofactor.

It localises to the cytoplasm. Its subcellular location is the nucleus. The catalysed reaction is N(6),N(6)-dimethyl-L-lysyl(9)-[histone H3] + 2 2-oxoglutarate + 2 O2 = L-lysyl(9)-[histone H3] + 2 formaldehyde + 2 succinate + 2 CO2. Histone demethylase that specifically demethylates 'Lys-9' of histone H3, thereby playing a central role in histone code. Preferentially demethylates mono- and dimethylated H3 'Lys-9' residue, with a preference for dimethylated residue, while it has weak or no activity on trimethylated H3 'Lys-9'. Demethylation of Lys residue generates formaldehyde and succinate. In Xenopus laevis (African clawed frog), this protein is Lysine-specific demethylase 3A-A (kdm3a-a).